Consider the following 221-residue polypeptide: Probable N-acetyl-alpha-D-glucosaminyl L-malate deacetylase 2 (221 aa).

3 residues coordinate Zn(2+): histidine 11, aspartate 14, and histidine 125.

Belongs to the PIGL family. Zn(2+) serves as cofactor.

The catalysed reaction is (S)-malyl N-acetyl-alpha-D-glucosaminide + H2O = (S)-malyl alpha-D-glucosaminide + acetate. Its function is as follows. Involved in bacillithiol (BSH) biosynthesis. Catalyzes the second step of the pathway, the deacetylation of N-acetylglucosaminylmalate (GlcNAc-Mal) to glucosamine malate (GlcN-Mal). This is Probable N-acetyl-alpha-D-glucosaminyl L-malate deacetylase 2 from Bacillus subtilis (strain 168).